A 101-amino-acid chain; its full sequence is NAD(P)H-quinone oxidoreductase subunit 4L, chloroplastic (101 aa).

3 helical membrane-spanning segments follow: residues 2–22 (MLEH…YGLI), 32–52 (MCLE…SDFF), and 61–81 (IFSI…SAIV).

The protein belongs to the complex I subunit 4L family. NDH is composed of at least 16 different subunits, 5 of which are encoded in the nucleus.

It localises to the plastid. It is found in the chloroplast thylakoid membrane. It catalyses the reaction a plastoquinone + NADH + (n+1) H(+)(in) = a plastoquinol + NAD(+) + n H(+)(out). The enzyme catalyses a plastoquinone + NADPH + (n+1) H(+)(in) = a plastoquinol + NADP(+) + n H(+)(out). Functionally, NDH shuttles electrons from NAD(P)H:plastoquinone, via FMN and iron-sulfur (Fe-S) centers, to quinones in the photosynthetic chain and possibly in a chloroplast respiratory chain. The immediate electron acceptor for the enzyme in this species is believed to be plastoquinone. Couples the redox reaction to proton translocation, and thus conserves the redox energy in a proton gradient. The polypeptide is NAD(P)H-quinone oxidoreductase subunit 4L, chloroplastic (Citrus sinensis (Sweet orange)).